Here is a 303-residue protein sequence, read N- to C-terminus: Pycsar effector protein XpPycTIR (303 aa).

Residue 14-138 (LVATLTEHRL…RRIAATLARR (125 aa)) coordinates a nucleoside 3',5'-cyclic phosphate. The segment at 154 to 273 (RVFIMSSVEA…DLAGLTTIPY (120 aa)) is TIR-like.

The protein localises to the cytoplasm. The enzyme catalyses NAD(+) + H2O = ADP-D-ribose + nicotinamide + H(+). In terms of biological role, pycsar (pyrimidine cyclase system for antiphage resistance) provides immunity against bacteriophage. The pyrimidine cyclase (PycC) synthesizes cyclic nucleotides in response to infection; these serve as specific second messenger signals. The signals activate the adjacent effector, leading to bacterial cell death and abortive phage infection. A clade B Pycsar system. Its function is as follows. The effector gene of a two-gene Pycsar system. Expression of this and adjacent uridylate cyclase XpPycC (AC P0DV28) confers resistance to bacteriophage T7. When cells expressing the Pycsar system are infected by phage T7 at low multiplicity of infection (0.2 MOI) the culture survivey, at 2.0 MOI bacteria enter growth arrest. The same cells enter growth arrest after exposure to 2.5 mM cUMP but not cCMP; the effector protein responds only to the cUMP usually produced by its cognate NTP cyclase. NAD(+) levels in infected cells are depleted between 5 and 10 minutes after infection with T7 at MOI of 2. Probably only responds to cUMP. This Xanthomonas perforans protein is Pycsar effector protein XpPycTIR.